A 95-amino-acid chain; its full sequence is MGLRYSKAVKDKYGDREIEGRATMTLNLPQGLYGRFNCKRCWFATKGLIACSDHYLCLNCLTIMLSDGNFCEVCGKTLPKKIVFEESPSAPPYDG.

A lipid anchor (N-myristoyl glycine; by host) is attached at G2. The segment at 38 to 74 (CKRCWFATKGLIACSDHYLCLNCLTIMLSDGNFCEVC) adopts an RING-type; atypical zinc-finger fold. Residues 88–91 (PSAP) carry the PTAP/PSAP motif motif.

It belongs to the arenaviridae Z protein family. As to quaternary structure, interacts with protein NP; this interaction probably directs the encapsidated genome to budding sites. Interacts (via RING domain) with polymerase L; this interaction inhibits viral transcription and replication, Z partially blocks the product exit tunnel for the releasing nascent RNA product. Interacts with the glycoprotein complex; this interaction plays a role in virion budding. Interacts with host eIF4E; this interaction results in eIF4E reduced affinity for its substrate, the 5'-m7 G cap structure. Interacts (via late-budding domain) with host TSG101; this interaction is essential for budding and release of viral particles. Interacts with host RPLP0; this interaction may serve to load ribosome-like particles inside the virion. Interacts with host PML; this interaction induces PML bodies redistribution in the cytoplasm upon viral infection. Myristoylation is required for the role of RING finger protein Z in assembly and budding.

The protein localises to the virion. Its subcellular location is the host cytoplasm. It is found in the host perinuclear region. It localises to the host cell membrane. Functionally, plays a crucial role in virion assembly and budding. Expressed late in the virus life cycle, it acts as an inhibitor of viral transcription and RNA synthesis by interacting with the viral polymerase L. Presumably recruits the NP encapsidated genome to cellular membranes at budding sites via direct interaction with NP. Plays critical roles in the final steps of viral release by interacting with host TSG101, a member of the vacuolar protein-sorting pathway and using other cellular host proteins involved in vesicle formation pathway. The budding of the virus progeny occurs after association of protein Z with the viral glycoprotein complex SSP-GP1-GP2 at the cell periphery, step that requires myristoylation of protein Z. Also selectively represses protein production by associating with host eIF4E. In cell-based minigenome assay, has an inhibitory effect on the ribonucleoprotein machinery (vRNP), which is responsible for the replication and transcription of the viral genome. This chain is RING finger protein Z, found in Sooretamys angouya (Paraguayan rice rat).